We begin with the raw amino-acid sequence, 234 residues long: Nuclear transcription factor Y subunit C-1 (234 aa).

Disordered stretches follow at residues 1–20 and 205–234; these read MDTN…PPPP and SVWQ…DGQG. Residues 7-20 show a composition bias toward pro residues; the sequence is QPPPSAAGIPPPPP. Residues 209 to 219 are compositionally biased toward low complexity; that stretch reads TSTGTGDDVSY. Gly residues predominate over residues 220 to 234; the sequence is GSGGSSGQGNLDGQG.

It belongs to the NFYC/HAP5 subunit family. Heterotrimeric transcription factor composed of three components, NF-YA, NF-YB and NF-YC. NF-YB and NF-YC must interact and dimerize for NF-YA association and DNA binding. In terms of tissue distribution, ubiquitous. Present in etiolated seedlings.

The protein localises to the nucleus. Stimulates the transcription of various genes by recognizing and binding to a CCAAT motif in promoters. This is Nuclear transcription factor Y subunit C-1 (NFYC1) from Arabidopsis thaliana (Mouse-ear cress).